Here is a 443-residue protein sequence, read N- to C-terminus: MERVNVVGAGLAGSEAAWTLLRLGVPVRLFEMRPKRMTPAHGTDRFAEIVCSNSLGGEGETNAKGLLQAEMRRAGSLVMEAADLARVPAGGALAVDREEFSGYITERLRGHPLLEVVREEVREIPPGITVLATGPLTSEALAEALKRRFGDHFLAYYDAASPIVLYESIDLTKCFRAGRYGQSADYLNCPMTEEEYRRFHQALLEAQRHTPHDWEKLEFFEACVPVEELARRGYQTLLFGPMKPVGLVDPRTGKEPFAVVQLRQEDKAGRMWSLVGFQTGLKWPEQKRLIQMIPGLENAEIVRYGVMHRNTYLNAPRLLGETLEFREAEGLYAAGVLAGVEGYLESAATGFLAGLNAARRALGLPPVAPPEESMLGGLVRYLATANPEGFQPMYANWGLVPPVEGRMGKKEKRQAMYRRGLEAFSAWLSGLNPPLPRPEAALV.

8–13 (GAGLAG) is an FAD binding site.

This sequence belongs to the MnmG family. TrmFO subfamily. FAD is required as a cofactor.

It is found in the cytoplasm. It catalyses the reaction uridine(54) in tRNA + (6R)-5,10-methylene-5,6,7,8-tetrahydrofolate + NADH + H(+) = 5-methyluridine(54) in tRNA + (6S)-5,6,7,8-tetrahydrofolate + NAD(+). The catalysed reaction is uridine(54) in tRNA + (6R)-5,10-methylene-5,6,7,8-tetrahydrofolate + NADPH + H(+) = 5-methyluridine(54) in tRNA + (6S)-5,6,7,8-tetrahydrofolate + NADP(+). In terms of biological role, catalyzes the folate-dependent formation of 5-methyl-uridine at position 54 (M-5-U54) in all tRNAs. The protein is Methylenetetrahydrofolate--tRNA-(uracil-5-)-methyltransferase TrmFO of Thermus thermophilus (strain ATCC BAA-163 / DSM 7039 / HB27).